A 443-amino-acid chain; its full sequence is MQEDLELGNQNFPMVLVQIPMYNEREVFKLSIGAACRLIWPLDRLIVQVLDDSTDPTIMEMVSTECGKWATKGINIKCERRDNRNGYKAGALKQGMRHSYVKTCTYIAIFDADFQPEPDYLERTVPFLIHNPELALVQARWKFVNAKKCLMTRMQEMSLNYHFTAEQESGSTRHAFFGFNGTAGVWRLAAMEEAGGWKDRTTVEDMDLAVRVGLHGWKFVFVNDVSVKSELPSQFKAFRFQQHRWSCGPANLFRKMTMEIIRNKRVTIWKKLYVIYSFFFVRKIIVHFFTFFFYCFILPTSVFFPEVNIPTWSTVYFPFMITLFNAIATPRSFYLVIFWVLFENVMAMHRTKGTFIGLLEGGRVNEWVVTEKLGDALETKLLPQVRKPRNGFLERINSKEMMVGIYILCCASYNLVFGKTVLYIYLYMQALAFIIAGIGFIGT.

Residue Asp52 is part of the active site. The substrate site is built by Asp111 and Asp113. Asp205 is an active-site residue. 4 consecutive transmembrane segments (helical) span residues 284–304 (IIVH…SVFF), 321–341 (ITLF…FWVL), 400–420 (EMMV…FGKT), and 421–441 (VLYI…IGFI).

The protein belongs to the glycosyltransferase 2 family. Plant cellulose synthase-like A subfamily.

It is found in the golgi apparatus membrane. The enzyme catalyses GDP-mannose + (glucomannan)n = GDP + (glucomannan)n+1.. In terms of biological role, probable mannan synthase which consists of a 4-beta-mannosyltransferase activity on mannan using GDP-mannose. The beta-1,4-mannan product is the backbone for galactomannan synthesis by galactomannan galactosyltransferase. Galactomannan is a noncellulosic polysaccharides of plant cell wall. The chain is Probable glucomannan 4-beta-mannosyltransferase 11 from Arabidopsis thaliana (Mouse-ear cress).